The following is a 113-amino-acid chain: Phosphorelay protein LuxU (113 aa).

The 96-residue stretch at 18–113 folds into the HPt domain; sequence GEENVPILVN…THQCYSDLVH (96 aa). Residue H57 is modified to Phosphohistidine.

In terms of assembly, monomer.

Phosphorelay protein which receives sensory signals from a sensory kinase and transmit them to LuxO. At low cell density, a phosphoryl group is transferred from the sensory kinase, probably on His-57 and this phosphoryl group is further transferred to LuxO. The chain is Phosphorelay protein LuxU (luxU) from Vibrio cholerae serotype O1 (strain ATCC 39315 / El Tor Inaba N16961).